Reading from the N-terminus, the 315-residue chain is DNA-directed RNA polymerase subunit alpha (315 aa).

Positions 1–228 (MLEIEKPKIE…EHFKLFMTLT (228 aa)) are alpha N-terminal domain (alpha-NTD). Residues 245 to 315 (KEKVLEMTIE…LELGLKQSEE (71 aa)) form an alpha C-terminal domain (alpha-CTD) region.

The protein belongs to the RNA polymerase alpha chain family. Homodimer. The RNAP catalytic core consists of 2 alpha, 1 beta, 1 beta' and 1 omega subunit. When a sigma factor is associated with the core the holoenzyme is formed, which can initiate transcription.

It carries out the reaction RNA(n) + a ribonucleoside 5'-triphosphate = RNA(n+1) + diphosphate. In terms of biological role, DNA-dependent RNA polymerase catalyzes the transcription of DNA into RNA using the four ribonucleoside triphosphates as substrates. The protein is DNA-directed RNA polymerase subunit alpha of Clostridium tetani (strain Massachusetts / E88).